Consider the following 1162-residue polypeptide: Integrin alpha-L (1162 aa).

A signal peptide spans 1-23 (MSFRIAGPRLLLLGLQLFAKAWS). Residues 24–1088 (YNLDTRPTQS…DLIHEKEMLH (1065 aa)) are Extracellular-facing. FG-GAP repeat units lie at residues 28–79 (TRPT…FCQP) and 80–138 (VSLH…GPML). An intrachain disulfide couples Cys70 to Cys77. A glycan (N-linked (GlcNAc...) asparagine) is linked at Asn86. Intrachain disulfides connect Cys108–Cys126 and Cys147–Cys199. The 173-residue stretch at 153 to 325 (DLVFLFDGSQ…EKLKDLFTDL (173 aa)) folds into the VWFA domain. Residues Asn185 and Asn270 are each glycosylated (N-linked (GlcNAc...) asparagine). FG-GAP repeat units follow at residues 336 to 387 (NRQD…GATF), 390 to 443 (QEPL…GGRW), 444 to 504 (NQTQ…LFEM), 505 to 561 (VSEL…GLSP), and 565 to 625 (QRIQ…FSPE). Asn444 is a glycosylation site (N-linked (GlcNAc...) asparagine). Ca(2+) is bound by residues Asp466, Asp468, Asp470, Glu474, Asp528, Asn530, Asp532, Asp536, Asp588, Asp592, and Asp596. Cys651 and Cys705 are oxidised to a cystine. Residues Asn668, Asn696, Asn724, and Asn728 are each glycosylated (N-linked (GlcNAc...) asparagine). A disulfide bond links Cys768 and Cys774. A glycan (N-linked (GlcNAc...) asparagine) is linked at Asn777. Cysteines 841 and 857 form a disulfide. Asn858, Asn881, Asn891, Asn900, and Asn928 each carry an N-linked (GlcNAc...) asparagine glycan. Disulfide bonds link Cys994/Cys1010 and Cys1018/Cys1049. An N-linked (GlcNAc...) asparagine glycan is attached at Asn1057. The chain crosses the membrane as a helical span at residues 1089–1109 (VYVLSGIGGLVLLFLIFLALY). Residues 1110–1162 (KVGFFKRNLKEKMEADGGVPNGSPPEDTDPLAVPGEETKDMGCLEPLRESDKD) lie on the Cytoplasmic side of the membrane. A GFFKR motif motif is present at residues 1112-1116 (GFFKR). The disordered stretch occupies residues 1124-1162 (ADGGVPNGSPPEDTDPLAVPGEETKDMGCLEPLRESDKD). Residues 1145 to 1162 (EETKDMGCLEPLRESDKD) show a composition bias toward basic and acidic residues.

Belongs to the integrin alpha chain family. In terms of assembly, heterodimer of an alpha and a beta subunit. The ITGAL alpha subunit associates with the ITGB2 beta subunit. Interacts with THBD. Interacts with CD226. In terms of processing, in resting T-cells, up to 40% of surface ITGAL is constitutively phosphorylated. Phosphorylation causes conformational changes needed for ligand binding and is necessary for the activation by some physiological agents. As to expression, leukocytes.

It localises to the cell membrane. Functionally, integrin ITGAL/ITGB2 is a receptor for ICAM1, ICAM2, ICAM3 and ICAM4. Integrin ITGAL/ITGB2 is a receptor for F11R. Integrin ITGAL/ITGB2 is a receptor for the secreted form of ubiquitin-like protein ISG15; the interaction is mediated by ITGAL. Involved in a variety of immune phenomena including leukocyte-endothelial cell interaction, cytotoxic T-cell mediated killing, and antibody dependent killing by granulocytes and monocytes. Contributes to natural killer cell cytotoxicity. Involved in leukocyte adhesion and transmigration of leukocytes including T-cells and neutrophils. Acts as a platform at the immunological synapse to translate TCR engagement and density of the ITGAL ligand ICAM1 into graded adhesion. Required for generation of common lymphoid progenitor cells in bone marrow, indicating the role in lymphopoiesis. Integrin ITGAL/ITGB2 in association with ICAM3, contributes to apoptotic neutrophil phagocytosis by macrophages. This is Integrin alpha-L from Mus musculus (Mouse).